Reading from the N-terminus, the 336-residue chain is Glyceraldehyde-3-phosphate dehydrogenase (336 aa).

Residues 12-13, D34, R78, and T121 each bind NAD(+); that span reads RI. Residues 151 to 153, T182, R199, 212 to 213, and R235 each bind D-glyceraldehyde 3-phosphate; these read SCT and TG. The active-site Nucleophile is the C152. N316 contacts NAD(+).

The protein belongs to the glyceraldehyde-3-phosphate dehydrogenase family. As to quaternary structure, homotetramer.

The protein resides in the cytoplasm. The enzyme catalyses D-glyceraldehyde 3-phosphate + phosphate + NAD(+) = (2R)-3-phospho-glyceroyl phosphate + NADH + H(+). Its pathway is carbohydrate degradation; glycolysis; pyruvate from D-glyceraldehyde 3-phosphate: step 1/5. In terms of biological role, catalyzes the oxidative phosphorylation of glyceraldehyde 3-phosphate (G3P) to 1,3-bisphosphoglycerate (BPG) using the cofactor NAD. The first reaction step involves the formation of a hemiacetal intermediate between G3P and a cysteine residue, and this hemiacetal intermediate is then oxidized to a thioester, with concomitant reduction of NAD to NADH. The reduced NADH is then exchanged with the second NAD, and the thioester is attacked by a nucleophilic inorganic phosphate to produce BPG. This Streptococcus pyogenes serotype M1 protein is Glyceraldehyde-3-phosphate dehydrogenase (gap).